Consider the following 714-residue polypeptide: Phenylalanine 2-monooxygenase precursor (714 aa).

Positions 1–15 (MGVTVIPRLLGLKDE) are cleaved as a propeptide — removed in mature form; occupies the channel of the substrate amino acid from the outside of the protein to the interior flavin ring in the precursor. FAD-binding positions include Gly-2, Gly-68, and 95–96 (EA). The propeptide at 108-109 (IK) is linker peptide. Residues Arg-120, 141-144 (GAMR), and Val-375 contribute to the FAD site. Residue Arg-144 coordinates substrate. Tyr-537 is a substrate binding site. Residues 652–653 (SD) and 660–662 (GWL) each bind FAD. Gly-660 contributes to the substrate binding site.

Belongs to the phenylalanine 2-monooxygenase family. Heterotetramer composed of 2 alpha and 2 beta subunits. FAD is required as a cofactor. In terms of processing, proteolytically cleaved to yield the active enzyme. Cleavage of the linkage between the 2 subunits causes reshaping of the oxygen channel and the hydrophobic environment around the flavin ring. Removal of the prosequence causes opening of the amino acid channel.

It catalyses the reaction L-phenylalanine + O2 = 2-phenylacetamide + CO2 + H2O. Functionally, catalyzes both oxygenative decarboxylation and oxidative deamination, depending on the substrate used. Has high activity for L-Phe and L-Tyr, but relatively low activities for L-Met and L-Trp. L-Phe is mainly oxygenated and L-Met is mainly oxidized. The polypeptide is Phenylalanine 2-monooxygenase precursor (Pseudomonas sp).